We begin with the raw amino-acid sequence, 190 residues long: Nascent polypeptide-associated complex subunit alpha (190 aa).

Disordered stretches follow at residues 20-42 (FDSD…AERK) and 123-155 (SLQN…VDAK). Over residues 30–40 (HASDKVASRAE) the composition is skewed to basic and acidic residues. One can recognise an NAC-A/B domain in the interval 37-102 (SRAERKSRKA…AKAEDMSQLA (66 aa)). Over residues 138–151 (EEEEDDDSPIDEEG) the composition is skewed to acidic residues. A UBA domain is found at 152 to 189 (VDAKDIDLVMQQVSCSRRKAVKALKESNGDLINAIMNA).

This sequence belongs to the NAC-alpha family. Part of the nascent polypeptide-associated complex (NAC), consisting of EGD2 and EGD1. NAC associates with ribosomes via EGD1.

It localises to the cytoplasm. It is found in the nucleus. In terms of biological role, component of the nascent polypeptide-associated complex (NAC), a dynamic component of the ribosomal exit tunnel, protecting the emerging polypeptides from interaction with other cytoplasmic proteins to ensure appropriate nascent protein targeting. The NAC complex also promotes mitochondrial protein import by enhancing productive ribosome interactions with the outer mitochondrial membrane and blocks the inappropriate interaction of ribosomes translating non-secretory nascent polypeptides with translocation sites in the membrane of the endoplasmic reticulum. EGD2 may also be involved in transcription regulation. In Mycosarcoma maydis (Corn smut fungus), this protein is Nascent polypeptide-associated complex subunit alpha (EGD2).